The primary structure comprises 310 residues: tRNA dimethylallyltransferase (310 aa).

13 to 20 lines the ATP pocket; sequence GPTASGKT. 15–20 contributes to the substrate binding site; that stretch reads TASGKT. 4 interaction with substrate tRNA regions span residues 38-41, 162-166, 243-248, and 276-283; these read DSAL, QRLSR, RCVGYR, and KRQITWLR.

The protein belongs to the IPP transferase family. In terms of assembly, monomer. Mg(2+) serves as cofactor.

It catalyses the reaction adenosine(37) in tRNA + dimethylallyl diphosphate = N(6)-dimethylallyladenosine(37) in tRNA + diphosphate. In terms of biological role, catalyzes the transfer of a dimethylallyl group onto the adenine at position 37 in tRNAs that read codons beginning with uridine, leading to the formation of N6-(dimethylallyl)adenosine (i(6)A). The sequence is that of tRNA dimethylallyltransferase from Vibrio campbellii (strain ATCC BAA-1116).